Reading from the N-terminus, the 414-residue chain is Serine--tRNA ligase (414 aa).

230-232 contacts L-serine; the sequence is TAE. ATP is bound at residue 261-263; that stretch reads RKE. Glutamate 284 is a binding site for L-serine. 348 to 351 serves as a coordination point for ATP; the sequence is EISS. Serine 382 contacts L-serine.

It belongs to the class-II aminoacyl-tRNA synthetase family. Type-1 seryl-tRNA synthetase subfamily. As to quaternary structure, homodimer. The tRNA molecule binds across the dimer.

It localises to the cytoplasm. The catalysed reaction is tRNA(Ser) + L-serine + ATP = L-seryl-tRNA(Ser) + AMP + diphosphate + H(+). The enzyme catalyses tRNA(Sec) + L-serine + ATP = L-seryl-tRNA(Sec) + AMP + diphosphate + H(+). It participates in aminoacyl-tRNA biosynthesis; selenocysteinyl-tRNA(Sec) biosynthesis; L-seryl-tRNA(Sec) from L-serine and tRNA(Sec): step 1/1. In terms of biological role, catalyzes the attachment of serine to tRNA(Ser). Is also able to aminoacylate tRNA(Sec) with serine, to form the misacylated tRNA L-seryl-tRNA(Sec), which will be further converted into selenocysteinyl-tRNA(Sec). The protein is Serine--tRNA ligase of Nitratiruptor sp. (strain SB155-2).